A 181-amino-acid chain; its full sequence is Putative manganese efflux pump MntP (181 aa).

Transmembrane regions (helical) follow at residues 5–25, 36–56, 66–86, 102–122, 130–150, and 158–178; these read LIALLIMASALGMDAFSIALG, MFKVGLTIGVFHVIMPLMGMV, GLFANWLGAGLLLWLGLVMIV, IGLFVFALSVSLDSLSAGLSL, ALAVVAMGVMSTVLSWLGLFI, and VGPYSELLGGFILCGFGVKLL.

This sequence belongs to the MntP (TC 9.B.29) family.

It is found in the cell membrane. In terms of biological role, probably functions as a manganese efflux pump. The polypeptide is Putative manganese efflux pump MntP (Halalkalibacterium halodurans (strain ATCC BAA-125 / DSM 18197 / FERM 7344 / JCM 9153 / C-125) (Bacillus halodurans)).